Consider the following 557-residue polypeptide: Probable protein kinase UbiB (557 aa).

The Protein kinase domain occupies 121–509; sequence SFDTVPLASA…RKLQTRVVTA (389 aa). Residues 127 to 135 and lysine 154 contribute to the ATP site; that span reads LASASIAQV. Aspartate 289 (proton acceptor) is an active-site residue. 2 helical membrane-spanning segments follow: residues 506–526 and 535–555; these read VVTAITGSGLLVVAAVLYGLH and VPVWSWISGGAGSAALLVAWL.

It belongs to the ABC1 family. UbiB subfamily.

Its subcellular location is the cell inner membrane. It functions in the pathway cofactor biosynthesis; ubiquinone biosynthesis [regulation]. Its function is as follows. Is probably a protein kinase regulator of UbiI activity which is involved in aerobic coenzyme Q (ubiquinone) biosynthesis. The chain is Probable protein kinase UbiB from Xanthomonas axonopodis pv. citri (strain 306).